The following is a 48-amino-acid chain: Ambineela (48 aa).

In terms of assembly, monomer. The blue color is due to an unidentified non-fluorescent cofactor, covalently bound to it.

Functionally, ambineela is a blue protein and has a pI of 8.7. This Acidianus ambivalens (Desulfurolobus ambivalens) protein is Ambineela.